A 311-amino-acid chain; its full sequence is Heme A synthase (311 aa).

The Cytoplasmic segment spans residues 1 to 6 (MQRFIK). The chain crosses the membrane as a helical span at residues 7–27 (WLAVITSLDLLIVLLGGALVT). Topologically, residues 28–62 (KTGSGQGCGKSWPLCNGEFVPSNLSMETIIELSHR) are extracellular. Residues cysteine 35 and cysteine 42 are joined by a disulfide bond. The active site involves glutamate 58. A heme o-binding site is contributed by histidine 61. A helical membrane pass occupies residues 63–83 (LTSGSAGILVTLLCILSWKYY). Topologically, residues 84 to 91 (KHVRETKT) are cytoplasmic. A helical transmembrane segment spans residues 92–112 (LAILSFVFLVAQALMGAAAVV). The Extracellular segment spans residues 113–121 (WGQMPAVLA). A helical membrane pass occupies residues 122-142 (IHFGISLISFASVILLTCLIF). Heme o is bound at residue histidine 123. Residues 143–159 (EIDQKFDARSLIMDKKM) are Cytoplasmic-facing. Residues 160–180 (KFHIYGVTIYCYLVVYTGALV) traverse the membrane as a helical segment. Over 181–211 (RHERASLACPDFPLCSKNRPMPTQLHEWVQM) the chain is Extracellular. Cysteine 189 and cysteine 195 are disulfide-bonded. The helical transmembrane segment at 212–232 (GHRLAAMLIFVWILYAMILAI) threads the bilayer. Residue histidine 213 participates in heme b binding. Residues 233–243 (RHYKQQPVVYW) are Cytoplasmic-facing. Residues 244-264 (GWIISFILVTLQAIVGILVVF) form a helical membrane-spanning segment. At 265 to 271 (TNASLAM) the chain is on the extracellular side. Residues 272-292 (ALLHSLFISCLFAVLCYLVML) form a helical membrane-spanning segment. Histidine 275 provides a ligand contact to heme b. Topologically, residues 293-311 (GTRSKVNAKEAASTSKQTK) are cytoplasmic.

This sequence belongs to the COX15/CtaA family. Type 1 subfamily. Interacts with CtaB. The cofactor is heme b.

The protein resides in the cell membrane. The enzyme catalyses Fe(II)-heme o + 2 A + H2O = Fe(II)-heme a + 2 AH2. It functions in the pathway porphyrin-containing compound metabolism; heme A biosynthesis; heme A from heme O: step 1/1. Functionally, catalyzes the conversion of heme O to heme A by two successive hydroxylations of the methyl group at C8. The first hydroxylation forms heme I, the second hydroxylation results in an unstable dihydroxymethyl group, which spontaneously dehydrates, resulting in the formyl group of heme A. This Bacillus cereus (strain 03BB102) protein is Heme A synthase.